The following is a 461-amino-acid chain: 23S rRNA (uracil(1939)-C(5))-methyltransferase RlmD (461 aa).

Residues 1-26 are disordered; sequence MAKHERGLRFQPTGGSKAPQIPTGKK. In terms of domain architecture, TRAM spans 20-78; that stretch reads QIPTGKKQRLSIERLANDGRGIAFFEGKTWFVLGALAGEEVEARVLGAHGKVVEARTER. Residues Cys-91, Cys-97, Cys-100, and Cys-179 each coordinate [4Fe-4S] cluster. Gln-283, Phe-312, Asn-317, Glu-333, Asp-360, and Asp-381 together coordinate S-adenosyl-L-methionine. The Nucleophile role is filled by Cys-407.

This sequence belongs to the class I-like SAM-binding methyltransferase superfamily. RNA M5U methyltransferase family. RlmD subfamily.

It carries out the reaction uridine(1939) in 23S rRNA + S-adenosyl-L-methionine = 5-methyluridine(1939) in 23S rRNA + S-adenosyl-L-homocysteine + H(+). Functionally, catalyzes the formation of 5-methyl-uridine at position 1939 (m5U1939) in 23S rRNA. The sequence is that of 23S rRNA (uracil(1939)-C(5))-methyltransferase RlmD from Pseudomonas fluorescens (strain Pf0-1).